A 34-amino-acid polypeptide reads, in one-letter code: Beta-theraphotoxin-Pmu1a (34 aa).

3 cysteine pairs are disulfide-bonded: C3–C18, C10–C23, and C17–C30. At L34 the chain carries Leucine amide.

It belongs to the neurotoxin 10 (Hwtx-1) family. 34 (Jztx-26) subfamily. Expressed by the venom gland.

It is found in the secreted. Spider venom neurotoxin that blocks voltage-gated sodium channels Nav1.3/SCN3A and Nav1.8/SCN10A in human (IC(50)=2 uM and IC(50)=4 uM, respectively) and rat (IC(50)=2 uM and IC(50)=2.5 uM, respectively). The chain is Beta-theraphotoxin-Pmu1a from Pterinochilus murinus (Mombasa golden starburst baboon spider).